Reading from the N-terminus, the 448-residue chain is Na(+)-malate symporter (448 aa).

11 consecutive transmembrane segments (helical) span residues Ile-31 to Tyr-51, Leu-60 to Ile-80, Ile-86 to Leu-106, Phe-123 to Val-143, Val-153 to Phe-173, Phe-182 to Ile-202, Val-214 to Ala-234, Leu-276 to Leu-293, Phe-297 to Leu-319, Phe-333 to Leu-353, and Val-359 to Gly-379.

It belongs to the 2-hydroxycarboxylate transporter (2-HCT) (TC 2.A.24) family.

The protein localises to the cell membrane. In terms of biological role, acts as a Na(+)-malate symporter, as it catalyzes malate-dependent uptake of Na(+) and Na(+)-dependent uptake of malate. This Bacillus subtilis (strain 168) protein is Na(+)-malate symporter.